Consider the following 688-residue polypeptide: Glycine--tRNA ligase beta subunit (688 aa).

This sequence belongs to the class-II aminoacyl-tRNA synthetase family. In terms of assembly, tetramer of two alpha and two beta subunits.

It localises to the cytoplasm. It carries out the reaction tRNA(Gly) + glycine + ATP = glycyl-tRNA(Gly) + AMP + diphosphate. The sequence is that of Glycine--tRNA ligase beta subunit from Histophilus somni (strain 129Pt) (Haemophilus somnus).